We begin with the raw amino-acid sequence, 157 residues long: Ribosome-binding factor A (157 aa).

Residues 126–157 form a disordered region; sequence RARATAQYAGDADPYKHDDEPSDDFEDDSDEE. A compositionally biased stretch (acidic residues) spans 145–157; it reads EPSDDFEDDSDEE.

Belongs to the RbfA family. Monomer. Binds 30S ribosomal subunits, but not 50S ribosomal subunits or 70S ribosomes.

It localises to the cytoplasm. Its function is as follows. One of several proteins that assist in the late maturation steps of the functional core of the 30S ribosomal subunit. Associates with free 30S ribosomal subunits (but not with 30S subunits that are part of 70S ribosomes or polysomes). Required for efficient processing of 16S rRNA. May interact with the 5'-terminal helix region of 16S rRNA. The chain is Ribosome-binding factor A from Bifidobacterium longum (strain DJO10A).